The primary structure comprises 396 residues: Acetyl-CoA acetyltransferase (396 aa).

Cysteine 89 serves as the catalytic Acyl-thioester intermediate. CoA contacts are provided by residues 223 to 225 and serine 249; that span reads RKS. Active-site proton acceptor residues include histidine 352 and cysteine 382.

This sequence belongs to the thiolase-like superfamily. Thiolase family.

The protein resides in the cytoplasm. It catalyses the reaction 2 acetyl-CoA = acetoacetyl-CoA + CoA. It functions in the pathway lipid metabolism; butanoate metabolism. In terms of biological role, involved in syntrophic growth of S.wolfei with butyrate, as part of the butyrate oxidation pathway. Probably catalyzes the beta-keto thiolysis of acetoacetyl-CoA, leading to 2 acetyl-CoA molecules. The chain is Acetyl-CoA acetyltransferase from Syntrophomonas wolfei subsp. wolfei (strain DSM 2245B / Goettingen).